A 144-amino-acid polypeptide reads, in one-letter code: Large ribosomal subunit protein uL15 (144 aa).

A disordered region spans residues 1-57 (MELNNLKPAEGAKHAKRRVGRGIGSGLGKTAGRGHKGQKSRSGGFHKVGFEGGQMPL). Positions 21-31 (RGIGSGLGKTA) are enriched in gly residues.

This sequence belongs to the universal ribosomal protein uL15 family. As to quaternary structure, part of the 50S ribosomal subunit.

Its function is as follows. Binds to the 23S rRNA. This chain is Large ribosomal subunit protein uL15, found in Paraburkholderia xenovorans (strain LB400).